The chain runs to 252 residues: Ubiquinone/menaquinone biosynthesis C-methyltransferase UbiE (252 aa).

Residues threonine 71, aspartate 100, aspartate 124 to alanine 125, and serine 141 each bind S-adenosyl-L-methionine.

The protein belongs to the class I-like SAM-binding methyltransferase superfamily. MenG/UbiE family.

The catalysed reaction is a 2-demethylmenaquinol + S-adenosyl-L-methionine = a menaquinol + S-adenosyl-L-homocysteine + H(+). It carries out the reaction a 2-methoxy-6-(all-trans-polyprenyl)benzene-1,4-diol + S-adenosyl-L-methionine = a 5-methoxy-2-methyl-3-(all-trans-polyprenyl)benzene-1,4-diol + S-adenosyl-L-homocysteine + H(+). It functions in the pathway quinol/quinone metabolism; menaquinone biosynthesis; menaquinol from 1,4-dihydroxy-2-naphthoate: step 2/2. Its pathway is cofactor biosynthesis; ubiquinone biosynthesis. Methyltransferase required for the conversion of demethylmenaquinol (DMKH2) to menaquinol (MKH2) and the conversion of 2-polyprenyl-6-methoxy-1,4-benzoquinol (DDMQH2) to 2-polyprenyl-3-methyl-6-methoxy-1,4-benzoquinol (DMQH2). The chain is Ubiquinone/menaquinone biosynthesis C-methyltransferase UbiE from Caulobacter sp. (strain K31).